A 692-amino-acid chain; its full sequence is Elongation factor G (692 aa).

In terms of domain architecture, tr-type G spans 8-283 (EMTRNIGIMA…AVLDYMPAPT (276 aa)). GTP-binding positions include 17–24 (AHIDAGKT), 81–85 (DTPGH), and 135–138 (NKMD).

Belongs to the TRAFAC class translation factor GTPase superfamily. Classic translation factor GTPase family. EF-G/EF-2 subfamily.

The protein localises to the cytoplasm. In terms of biological role, catalyzes the GTP-dependent ribosomal translocation step during translation elongation. During this step, the ribosome changes from the pre-translocational (PRE) to the post-translocational (POST) state as the newly formed A-site-bound peptidyl-tRNA and P-site-bound deacylated tRNA move to the P and E sites, respectively. Catalyzes the coordinated movement of the two tRNA molecules, the mRNA and conformational changes in the ribosome. In Citrifermentans bemidjiense (strain ATCC BAA-1014 / DSM 16622 / JCM 12645 / Bem) (Geobacter bemidjiensis), this protein is Elongation factor G.